Consider the following 112-residue polypeptide: Large ribosomal subunit protein bL17 (112 aa).

This sequence belongs to the bacterial ribosomal protein bL17 family. As to quaternary structure, part of the 50S ribosomal subunit. Contacts protein L32.

This Desulforamulus reducens (strain ATCC BAA-1160 / DSM 100696 / MI-1) (Desulfotomaculum reducens) protein is Large ribosomal subunit protein bL17.